Reading from the N-terminus, the 363-residue chain is Mitochondrial phosphate carrier protein 2, mitochondrial (363 aa).

A helical transmembrane segment spans residues 65–85 (AYFAACTVAGMLSCGITHTAI). 3 Solcar repeats span residues 65–149 (AYFA…AKKY), 162–246 (YKTL…TVEL), and 263–342 (VQLG…VKVL). The Mitochondrial matrix portion of the chain corresponds to 86–123 (TPLDVIKCNMQIDPLKYKNITSAFKTTIKEQGLKGFTR). Residues 124–143 (GWSPTLLGYSAQGAFKYGLY) traverse the membrane as a helical segment. Residues 144 to 164 (EYAKKYYSDIVGPEYAAKYKT) are Mitochondrial intermembrane-facing. A helical membrane pass occupies residues 165–185 (LIYLAGSASAEIVADVALCPM). The Mitochondrial matrix portion of the chain corresponds to 186–220 (EAVKVRVQTQPGFARGLSDGLPKIIKSEGFRGLHK). A helical membrane pass occupies residues 221 to 240 (GLVPLWGRQIPYTMMKFATF). Over 241-261 (ENTVELIYKKVMPTPKEECSK) the chain is Mitochondrial intermembrane. The helical transmembrane segment at 262–282 (PVQLGVSFAGGYIAGIFCAII) threads the bilayer. Residues 283–321 (SHPADNLVSFLNNSKGATVADAVKRLGLWGMLTRGLPLR) lie on the Mitochondrial matrix side of the membrane. The chain crosses the membrane as a helical span at residues 322 to 342 (IFMIGTLTGAQWVIYDAVKVL). Residues 343–363 (AGLPTTGGASPATALAPSVSA) lie on the Mitochondrial intermembrane side of the membrane.

It belongs to the mitochondrial carrier (TC 2.A.29) family. Expressed in leaves. Strong expression in senescent leaves.

It is found in the mitochondrion inner membrane. Its function is as follows. Transport of phosphate groups from the cytosol to the mitochondrial matrix. Mediates salt stress tolerance through an ATP-dependent pathway and via modulation of the gibberellin metabolism. This chain is Mitochondrial phosphate carrier protein 2, mitochondrial (MPT2), found in Arabidopsis thaliana (Mouse-ear cress).